Consider the following 93-residue polypeptide: Red pigment-concentrating hormone (93 aa).

The first 21 residues, 1–21 (MVRAVVATLLVVLVVASCVSA), serve as a signal peptide directing secretion. At Gln22 the chain carries Pyrrolidone carboxylic acid. Tryptophan amide is present on Trp29. Positions 33–93 (AAAGGEGTGM…VQCQDEEYLG (61 aa)) are excised as a propeptide. Residues 34–56 (AAGGEGTGMHPPAGAVVPPPSSL) form a disordered region.

This sequence belongs to the AKH/HRTH/RPCH family. As to expression, strongly expressed in the eyestalk and weakly in brain. Not expressed in other tissues tested.

It localises to the secreted. Functionally, this hormone adapts the animal to light backgrounds by stimulating concentration of the pigment of its red body-chromatophores. This chain is Red pigment-concentrating hormone, found in Penaeus monodon (Giant tiger prawn).